The sequence spans 374 residues: Formylglycine-generating enzyme (374 aa).

Positions 1–33 are cleaved as a signal peptide; the sequence is MAAPALGPARGCGAELTLVLLLSLFLLLGWAAG. Cys-50 and Cys-52 are disulfide-bonded. Residues 57–102 are disordered; it reads RPGAQGSSAAAHRYSREANAPGSVPGGRPSPPTKMVPIPAGVFTMG. Glu-130 is a Ca(2+) binding site. Asn-141 carries an N-linked (GlcNAc...) asparagine glycan. 2 disulfides stabilise this stretch: Cys-218–Cys-365 and Cys-235–Cys-346. 8 residues coordinate Ca(2+): Asn-259, Ile-260, Asp-273, Phe-275, Asn-293, Gly-296, Ala-298, and Glu-300. Positions 336 and 341 each coordinate Cu(2+). The tract at residues 341–360 is interaction with sulfatases; that stretch reads CYRYRCAARSQNTPDSSASN.

It belongs to the sulfatase-modifying factor family. Monomer, homodimer and heterodimer with SUMF2. The cofactor is Cu(2+). Post-translationally, N-glycosylated. Contains high-mannose-type oligosaccharides.

The protein localises to the endoplasmic reticulum lumen. The catalysed reaction is L-cysteinyl-[sulfatase] + 2 a thiol + O2 = an organic disulfide + 3-oxo-L-alanyl-[sulfatase] + hydrogen sulfide + H2O + H(+). It participates in protein modification; sulfatase oxidation. Its function is as follows. Oxidase that catalyzes the conversion of cysteine to 3-oxoalanine on target proteins, using molecular oxygen and an unidentified reducing agent. 3-oxoalanine modification, which is also named formylglycine (fGly), occurs in the maturation of arylsulfatases and some alkaline phosphatases that use the hydrated form of 3-oxoalanine as a catalytic nucleophile. Known substrates include GALNS, ARSA, STS and ARSE. In Bos taurus (Bovine), this protein is Formylglycine-generating enzyme.